We begin with the raw amino-acid sequence, 664 residues long: Macoilin (664 aa).

The next 4 helical transmembrane spans lie at 28–48 (TFLYLKFLVVWALVLLADFVL), 75–95 (AFSVFFVCVAFTSNIICLLFI), 120–140 (VCLPTVSLWILFVYIEAAIRF), and 154–174 (FAAHCIGYPVVTLGFGFKSYV). Residues 253-265 (REKGKEKDKDAKK) show a composition bias toward basic and acidic residues. Residues 253-274 (REKGKEKDKDAKKHNLGINNNN) form a disordered region. Residue S305 is modified to Phosphoserine. A compositionally biased stretch (polar residues) spans 320 to 348 (KNYKNASGVVNSSPRSHSATNGSIPSSSS). The segment at 320–375 (KNYKNASGVVNSSPRSHSATNGSIPSSSSKNEKKQKCTSKSPSTHKDLMENCIPNN) is disordered. N324 carries N-linked (GlcNAc...) asparagine glycosylation. S332 bears the Phosphoserine mark. N-linked (GlcNAc...) asparagine glycosylation is found at N340 and N452. A disordered region spans residues 630–664 (TSPLSPVSPHYSSKFVETSPSGLDPNASVYQPLKK). Phosphoserine is present on residues S631 and S634. The N-linked (GlcNAc...) asparagine glycan is linked to N655.

The protein belongs to the macoilin family.

It is found in the rough endoplasmic reticulum membrane. Its subcellular location is the nucleus membrane. Its function is as follows. Plays a role in the regulation of neuronal activity. In Canis lupus familiaris (Dog), this protein is Macoilin (MACO1).